The chain runs to 512 residues: Maturase K (512 aa).

Belongs to the intron maturase 2 family. MatK subfamily.

The protein resides in the plastid. It localises to the chloroplast. In terms of biological role, usually encoded in the trnK tRNA gene intron. Probably assists in splicing its own and other chloroplast group II introns. The protein is Maturase K of Zantedeschia aethiopica (White calla lily).